We begin with the raw amino-acid sequence, 584 residues long: Pescadillo homolog (584 aa).

Positions 1 to 54 (MGGLEKKKYERGSATNYITRNKARKKLQLSLPDFRRLCILKGIYPHEPKHKKKV) are required for 28S ribosomal RNA processing. The interval 1–257 (MGGLEKKKYE…PKLEGQAQAE (257 aa)) is sufficient for nucleolar localization. Residue lysine 98 is modified to N6-acetyllysine. Residues 312–414 (RKKELEAQEK…LLLPVAEYFP (103 aa)) are sufficient for interaction with MAP1B. The 94-residue stretch at 321–414 (KHKKLFEGLK…LLLPVAEYFP (94 aa)) folds into the BRCT domain. A disordered region spans residues 449 to 510 (DPGHLEEEEE…EEKKPQVMAG (62 aa)). A compositionally biased stretch (acidic residues) spans 454–489 (EEEEEEDEDDDNEGDVAAENEEEDVEVESEEEEEEE). Residues 496–505 (EQHRLEEKKP) are compositionally biased toward basic and acidic residues. A Glycyl lysine isopeptide (Lys-Gly) (interchain with G-Cter in SUMO1); alternate cross-link involves residue lysine 513. Lysine 513 participates in a covalent cross-link: Glycyl lysine isopeptide (Lys-Gly) (interchain with G-Cter in SUMO2); alternate. The segment at 535 to 584 (MMKKREKYLYQKIMFGKRRKIREANKLAEKRKAHDDAVRSEKKAKRTRPV) is required for 28S ribosomal RNA processing. The span at 560–575 (KLAEKRKAHDDAVRSE) shows a compositional bias: basic and acidic residues. The tract at residues 560-584 (KLAEKRKAHDDAVRSEKKAKRTRPV) is disordered.

Belongs to the pescadillo family. Component of the PeBoW complex, composed of BOP1, PES1 and WDR12. The complex is held together by BOP1, which interacts with PES1 via its N-terminal domain and with WDR12 via a high-affinity interaction between the seven-bladed beta-propeller domains of the 2 proteins. The PeBoW complex associates with the 66S pre-ribosome. The PeBoW complex also associates with DDX27, PES1 interacts directly with DDX27. Interacts with IRS1 and UBTF. May interact with MAP1B. In terms of processing, sumoylated. As to expression, ubiquitous. Highest levels appear to be found in tissues that contain a population of proliferating cells, such as ovary and testis. Also appears to be highly expressed in kidney and liver. In the brain expression is restricted to neural progenitor cells and postmitotic neurons. Highly expressed in malignant astrocytes.

Its subcellular location is the nucleus. It localises to the nucleolus. It is found in the nucleoplasm. The protein localises to the chromosome. In terms of biological role, component of the PeBoW complex, which is required for maturation of 28S and 5.8S ribosomal RNAs and formation of the 60S ribosome. The polypeptide is Pescadillo homolog (Pes1) (Mus musculus (Mouse)).